Consider the following 206-residue polypeptide: uncharacterized protein (206 aa).

This is an uncharacterized protein from Methanocaldococcus jannaschii (strain ATCC 43067 / DSM 2661 / JAL-1 / JCM 10045 / NBRC 100440) (Methanococcus jannaschii).